We begin with the raw amino-acid sequence, 257 residues long: UPF0246 protein Spro_0686 (257 aa).

This sequence belongs to the UPF0246 family.

This chain is UPF0246 protein Spro_0686, found in Serratia proteamaculans (strain 568).